We begin with the raw amino-acid sequence, 302 residues long: 33 kDa chaperonin (302 aa).

Cystine bridges form between Cys-247–Cys-249 and Cys-280–Cys-283.

It belongs to the HSP33 family. Post-translationally, under oxidizing conditions two disulfide bonds are formed involving the reactive cysteines. Under reducing conditions zinc is bound to the reactive cysteines and the protein is inactive.

It localises to the cytoplasm. Functionally, redox regulated molecular chaperone. Protects both thermally unfolding and oxidatively damaged proteins from irreversible aggregation. Plays an important role in the bacterial defense system toward oxidative stress. This chain is 33 kDa chaperonin, found in Prochlorococcus marinus (strain MIT 9301).